An 831-amino-acid polypeptide reads, in one-letter code: Probable DNA-directed RNA polymerase (831 aa).

Active-site residues include Asp-490, Lys-560, and Asp-738.

It belongs to the phage and mitochondrial RNA polymerase family.

It is found in the mitochondrion. It carries out the reaction RNA(n) + a ribonucleoside 5'-triphosphate = RNA(n+1) + diphosphate. In terms of biological role, DNA-dependent RNA polymerase catalyzes the transcription of DNA into RNA using the four ribonucleoside triphosphates as substrates. This Gelasinospora sp. (strain G114) protein is Probable DNA-directed RNA polymerase.